Reading from the N-terminus, the 340-residue chain is MDQTLTHTGSKKACVIGGTGNLASILIKHLLQSGYKVNTTVRDPENEKKIAHLRKLQELGDLKIFKADLTDEDSFESSFSGCEYIFHVATPINFKSEDPEKDMIKPAIQGVINVLKSCLKSKSVKRVIYTSSAAAVSINNLSGTGIVMNEENWTDVEFLTEEKPFNWGYPISKVLAEKTAWEFAKENKINLVTVIPALIAGNSLLSDPPSSLSLSMSFITGKEMHVTGLKEMQKLSGSISFVHVDDLARAHLFLAEKETASGRYICCAYNTSVPEIADFLIQRYPKYNVLSEFEEGLSIPKLTLSSQKLINEGFRFEYGINEMYDQMIEYFESKGLIKAK.

NADP(+)-binding residues include Lys-49 and Tyr-169.

The protein belongs to the NAD(P)-dependent epimerase/dehydratase family. Dihydroflavonol-4-reductase subfamily. As to quaternary structure, homo- or heterodimer. Flowers and young siliques. Detected specifically in the endothelium of seed coat.

It carries out the reaction a (2R,3R)-flavan-3-ol + 2 NAD(+) = an anthocyanidin with a 3-hydroxy group + 2 NADH + 2 H(+). It catalyses the reaction a (2R,3R)-flavan-3-ol + 2 NADP(+) = an anthocyanidin with a 3-hydroxy group + 2 NADPH + 2 H(+). The protein operates within secondary metabolite biosynthesis; flavonoid biosynthesis. Inhibited by (+)-catechin, quercetin and (+)- and (-)-dihydroquercetin. Not inhibited by salt. Positive cooperativity with NADPH acting as cosubstrate and modulator. Involved in the biosynthesis of condensed tannins. Converts cyanidin into (-)-epicatechin as the major product. This is Anthocyanidin reductase (BAN) from Arabidopsis thaliana (Mouse-ear cress).